The following is a 339-amino-acid chain: uncharacterized protein (339 aa).

The 231-residue stretch at L13–I243 folds into the ABC transporter domain. G45 to S52 lines the ATP pocket.

Belongs to the ABC transporter superfamily.

Its subcellular location is the cell inner membrane. In terms of biological role, probably part of a binding-protein-dependent transport system y4fNOP. Probably responsible for energy coupling to the transport system. This is an uncharacterized protein from Sinorhizobium fredii (strain NBRC 101917 / NGR234).